The following is a 98-amino-acid chain: Cystatin-B (98 aa).

Met-1 carries the post-translational modification N-acetylmethionine. The short motif at 46–50 (QLVAG) is the Secondary area of contact element.

Belongs to the cystatin family. Able to form dimers stabilized by noncovalent forces.

The protein resides in the cytoplasm. In terms of biological role, this is an intracellular thiol proteinase inhibitor. This Ovis aries (Sheep) protein is Cystatin-B (CSTB).